Reading from the N-terminus, the 317-residue chain is Methionyl-tRNA formyltransferase (317 aa).

110–113 serves as a coordination point for (6S)-5,6,7,8-tetrahydrofolate; the sequence is SLLP.

Belongs to the Fmt family.

It catalyses the reaction L-methionyl-tRNA(fMet) + (6R)-10-formyltetrahydrofolate = N-formyl-L-methionyl-tRNA(fMet) + (6S)-5,6,7,8-tetrahydrofolate + H(+). Functionally, attaches a formyl group to the free amino group of methionyl-tRNA(fMet). The formyl group appears to play a dual role in the initiator identity of N-formylmethionyl-tRNA by promoting its recognition by IF2 and preventing the misappropriation of this tRNA by the elongation apparatus. In Bacillus subtilis (strain 168), this protein is Methionyl-tRNA formyltransferase.